Reading from the N-terminus, the 208-residue chain is Outer-membrane lipoprotein carrier protein (208 aa).

An N-terminal signal peptide occupies residues 1 to 24 (MRMNIVQKILSATCFALLPLLAHA).

This sequence belongs to the LolA family. In terms of assembly, monomer.

The protein resides in the periplasm. Participates in the translocation of lipoproteins from the inner membrane to the outer membrane. Only forms a complex with a lipoprotein if the residue after the N-terminal Cys is not an aspartate (The Asp acts as a targeting signal to indicate that the lipoprotein should stay in the inner membrane). This Dechloromonas aromatica (strain RCB) protein is Outer-membrane lipoprotein carrier protein.